The following is a 31-amino-acid chain: Photosystem II reaction center protein T (31 aa).

A helical membrane pass occupies residues 3–23 (ALVYTFLLVGTLGIIFFAIFF).

Belongs to the PsbT family. As to quaternary structure, PSII is composed of 1 copy each of membrane proteins PsbA, PsbB, PsbC, PsbD, PsbE, PsbF, PsbH, PsbI, PsbJ, PsbK, PsbL, PsbM, PsbT, PsbY, PsbZ, Psb30/Ycf12, at least 3 peripheral proteins of the oxygen-evolving complex and a large number of cofactors. It forms dimeric complexes.

The protein localises to the plastid. It is found in the chloroplast thylakoid membrane. Functionally, found at the monomer-monomer interface of the photosystem II (PS II) dimer, plays a role in assembly and dimerization of PSII. PSII is a light-driven water plastoquinone oxidoreductase, using light energy to abstract electrons from H(2)O, generating a proton gradient subsequently used for ATP formation. This chain is Photosystem II reaction center protein T, found in Chlorella vulgaris (Green alga).